The primary structure comprises 393 residues: MASATAAAAPGEAEETTRLRKPRFSFEENQILIREVRAHYPQLYGAQSRRVSVAERRRVWDSIATKINGITSWKRTGQEVQKRWNDFKRRTKEKLARVPHSTQGAGPAAEDAFSAEEETIFAILGPGVAGPGAGSGAEESRAAASSQPQASTASTQRYVLSEDRRQDRRADTPAQSKGGSSSPESWARPSCNPQEAKERESTSPAAMQPVQLPRLALSPPLPAPPPPPTALAQVAPSSPSPTPPRPTSAPEQSLDFLRAQQETANAIRELAGTLRQGLAKLSEALSALLPLLPGTPADPLPPPPPPPPPPPPKPVLPPSAPKVELAPEPVSVVAAVVDGAVVAARGVIISPRSEEGVPKPLPPAPPLPLHDSPPHKRRKGFPTRKRRGRWKSP.

The span at 1–11 (MASATAAAAPG) shows a compositional bias: low complexity. The segment at 1–21 (MASATAAAAPGEAEETTRLRK) is disordered. The 73-residue stretch at 16-88 (TTRLRKPRFS…EVQKRWNDFK (73 aa)) folds into the Myb-like domain. Residues 87-90 (FKRR) carry the Nuclear localization signal motif. Disordered regions lie at residues 125–254 (GPGV…EQSL), 290–323 (PLLP…APKV), and 348–393 (IISP…WKSP). The span at 142–157 (AAASSQPQASTASTQR) shows a compositional bias: low complexity. Positions 160-171 (LSEDRRQDRRAD) are enriched in basic and acidic residues. The span at 173 to 184 (PAQSKGGSSSPE) shows a compositional bias: polar residues. Pro residues-rich tracts occupy residues 219–229 (PPLPAPPPPPT), 238–247 (SPSPTPPRPT), 296–320 (PADP…PPSA), and 359–368 (KPLPPAPPLP). A compositionally biased stretch (basic residues) spans 375–393 (HKRRKGFPTRKRRGRWKSP). Short sequence motifs (nuclear localization signal) lie at residues 376-379 (KRRK) and 384-387 (RKRR).

In terms of assembly, interacts with PFN1. Homodimer and heterodimer with PFN1. In terms of tissue distribution, ubiquitous. Highly expressed in brain, liver and testis. Moderate expression in heart, lung and skeletal muscle. Low expression in spleen and kidney.

It localises to the nucleus. Transcriptional repressor; DNA-binding protein that specifically recognizes the core sequence 5'-YAAC[GT]G-3'. Dimerization with PFN1 reduces its DNA-binding capacity. The chain is Myb-related transcription factor, partner of profilin (Mypop) from Mus musculus (Mouse).